The primary structure comprises 856 residues: Centrosomal protein of 97 kDa (856 aa).

LRR repeat units lie at residues 37 to 58 (DVHT…EKCK), 59 to 80 (QLIQ…AKLT), 81 to 102 (QLRV…KDLV), 103 to 124 (HLEW…NSCT), 125 to 146 (ALQH…SKLI), 147 to 168 (SLKT…PAYL), 171 to 192 (NLSI…SFLA), and 196 to 205 (ELEQLSIMNN). The 39-residue stretch at 211–249 (TPSIPGFDYRPFIVSWCLNLRVLDGYVISQKESLKAEWL) folds into the LRRCT domain. Positions 300–742 (HQRQLMSQSQ…KCVKDRDSEA (443 aa)) are CCP110-binding. Phosphoserine is present on residues serine 308 and serine 410. The tract at residues 430–451 (DDGADEFTKGLENQDEDKDKEK) is disordered. Serine 497 carries the phosphoserine modification. Positions 498–513 (LTSLPESAGHSASRTE) are enriched in polar residues. The disordered stretch occupies residues 498–525 (LTSLPESAGHSASRTEANSEEAMSPATS). Phosphoserine is present on serine 521. At threonine 534 the chain carries Phosphothreonine. The region spanning 550-579 (LNAAATKLQACWRGFYTRNYNQQAKGVRYE) is the IQ domain. An interaction with MPHOSPH9 region spans residues 579 to 853 (EIRLRRMQEH…FQGLHVGVTV (275 aa)). Disordered regions lie at residues 646 to 672 (PPIS…DQSS) and 737 to 840 (DRDS…PPEC). The segment covering 737–752 (DRDSEATAEEHSDCSR) has biased composition (basic and acidic residues). Residues 753–773 (ESSASEQDNTLLQQYLTSVQQ) are compositionally biased toward polar residues. At serine 755 the chain carries Phosphoserine. Acidic residues predominate over residues 776–787 (DAAEAADSDDVA). Residues 799–811 (ERFDASSDSETHR) show a composition bias toward basic and acidic residues. The span at 812–833 (VASTSQDEISQTPENCQLNEEA) shows a compositional bias: polar residues.

As to quaternary structure, interacts with CALM1, CEP76, KIF24 and TALPID3. Interacts with CCP110. ENKD1 competes with CEP97 for binding to CCP110, destabilizing the interaction between CP110 and CEP97 which promotes the removal of CCP110 and CEP97 from the mother centriole and allows the initiation of ciliogenesis. Via its interaction with CCP110, may indirectly interact with HERC2 and NEURL4. Interacts with MPHOSPH9.

The protein localises to the cytoplasm. It localises to the cytoskeleton. It is found in the microtubule organizing center. The protein resides in the centrosome. Its subcellular location is the centriole. In terms of biological role, acts as a key negative regulator of ciliogenesis in collaboration with CCP110 by capping the mother centriole thereby preventing cilia formation. Required for recruitment of CCP110 to the centrosome. The sequence is that of Centrosomal protein of 97 kDa (Cep97) from Mus musculus (Mouse).